We begin with the raw amino-acid sequence, 228 residues long: MAPIDWKKWRHVTKLDPDKKITRQDIAAIVDSGTDAVMISGTQNITKENVGNMIDMLAEYSIPKVLEPSVSAIIRNDVDFIFVPSIFNTKYSKFAVGYHKDFVKNYPDEVLDKVIPEAYIVLNPLSAVAIVTRAQTGISPREAAAYAELADRFFRFPVVYIEYSGTYGNPELVKAVREKLTNTVLYYGGGIDSREKAETMAKYANTIVVGNAVYKKGGIEKLKETIVK.

Residue lysine 14 coordinates sn-glycerol 1-phosphate. Residues aspartate 16 and threonine 42 each contribute to the Mg(2+) site. Residues 160-165, glycine 190, and 210-211 contribute to the sn-glycerol 1-phosphate site; these read YIEYSG and GN.

This sequence belongs to the GGGP/HepGP synthase family. Group I subfamily. Requires Mg(2+) as cofactor.

It is found in the cytoplasm. It carries out the reaction sn-glycerol 1-phosphate + (2E,6E,10E)-geranylgeranyl diphosphate = sn-3-O-(geranylgeranyl)glycerol 1-phosphate + diphosphate. It participates in membrane lipid metabolism; glycerophospholipid metabolism. In terms of biological role, prenyltransferase that catalyzes the transfer of the geranylgeranyl moiety of geranylgeranyl diphosphate (GGPP) to the C3 hydroxyl of sn-glycerol-1-phosphate (G1P). This reaction is the first ether-bond-formation step in the biosynthesis of archaeal membrane lipids. This is Geranylgeranylglyceryl phosphate synthase from Methanocella arvoryzae (strain DSM 22066 / NBRC 105507 / MRE50).